The chain runs to 82 residues: Putative Fe(2+) transport protein A (82 aa).

It belongs to the FeoA family.

Might be involved in Fe(2+) ion uptake. This Methanocaldococcus jannaschii (strain ATCC 43067 / DSM 2661 / JAL-1 / JCM 10045 / NBRC 100440) (Methanococcus jannaschii) protein is Putative Fe(2+) transport protein A.